The primary structure comprises 113 residues: Transmembrane protein 256 (113 aa).

An N-terminal signal peptide occupies residues 1 to 29; it reads MAGVGAAFRRLGALSGAGALGLASYGAHG. The Extracellular segment spans residues 30–63; the sequence is AQFPDAYGKELFDKANKHHFLHSLALLGVPSCRK. K43 carries the N6-acetyllysine modification. The chain crosses the membrane as a helical span at residues 64-84; it reads PVWAGLLLASGTTLFCTSFYY. Over 85 to 92 the chain is Cytoplasmic; the sequence is QALSGDTS. A helical membrane pass occupies residues 93–113; the sequence is IQTLGPVGGSLLILGWLALAF.

It belongs to the TMEM256 family.

Its subcellular location is the membrane. In Mus musculus (Mouse), this protein is Transmembrane protein 256 (Tmem256).